Reading from the N-terminus, the 378-residue chain is Acid phosphatase-like protein XcAP-2 (378 aa).

The first 19 residues, Met1–Ala19, serve as a signal peptide directing secretion. Intrachain disulfides connect Cys147-Cys374, Cys168-Cys220, and Cys347-Cys351.

This sequence belongs to the histidine acid phosphatase family.

It localises to the secreted. Its function is as follows. Probably modulates blood feeding of fleas on vertebrate species by binding and sequestering different mediators involved in the host response. Binds histamine. Binds leukotriene B4, leukotriene C4, leukotriene D4 and leukotriene E4. Does not bind serotonin, adrenaline, noradrenaline, ADP, and stable analogs of thromboxane A2: U-46619 and cTXA2. This chain is Acid phosphatase-like protein XcAP-2, found in Xenopsylla cheopis (Oriental rat flea).